A 185-amino-acid chain; its full sequence is MIQDVKNTAEQKMQKSIEALKADLSKVRTGRAHTGLLDHVQVEYYGSMVAINQVASVSLGDARTLNVQAYEKNMTPKVEKAIRDADLGLNPATNGDIIRVPMPMLTEERRRDLVKVVRSEAENAKVAIRNVRRDANDALKKLVKDKEISEDDERRAQDEVQKLTDKFVAEIDKLLQTKEAELMAV.

This sequence belongs to the RRF family.

The protein resides in the cytoplasm. Functionally, responsible for the release of ribosomes from messenger RNA at the termination of protein biosynthesis. May increase the efficiency of translation by recycling ribosomes from one round of translation to another. The sequence is that of Ribosome-recycling factor from Methylobacillus flagellatus (strain ATCC 51484 / DSM 6875 / VKM B-1610 / KT).